Here is a 188-residue protein sequence, read N- to C-terminus: GTP cyclohydrolase 1 (188 aa).

Zn(2+) contacts are provided by Cys-76, His-79, and Cys-148.

Belongs to the GTP cyclohydrolase I family. Homomer.

It catalyses the reaction GTP + H2O = 7,8-dihydroneopterin 3'-triphosphate + formate + H(+). The protein operates within cofactor biosynthesis; 7,8-dihydroneopterin triphosphate biosynthesis; 7,8-dihydroneopterin triphosphate from GTP: step 1/1. This chain is GTP cyclohydrolase 1, found in Thermoanaerobacter pseudethanolicus (strain ATCC 33223 / 39E) (Clostridium thermohydrosulfuricum).